Reading from the N-terminus, the 632-residue chain is Arginyl-tRNA--protein transferase 1 (632 aa).

Positions 1 to 18 (MSLKNDASSSHDGGSNRE) are enriched in polar residues. Disordered stretches follow at residues 1-27 (MSLK…HGRR), 113-144 (KLDV…AKSE), 284-312 (NGNI…HQAR), and 517-580 (PAAS…NDIN). A compositionally biased stretch (basic and acidic residues) spans 113 to 122 (KLDVQPREQR). The span at 285 to 296 (GNISRGANSLDG) shows a compositional bias: polar residues. Residues 298–310 (ETLHAKKDSENHQ) are compositionally biased toward basic and acidic residues. Positions 538–563 (SDEDEDEDEDDDDDDDDDEEMYETES) are enriched in acidic residues. Basic and acidic residues predominate over residues 564-578 (EDSHIESDPGSKDND).

It belongs to the R-transferase family.

The enzyme catalyses an N-terminal L-alpha-aminoacyl-[protein] + L-arginyl-tRNA(Arg) = an N-terminal L-arginyl-L-aminoacyl-[protein] + tRNA(Arg) + H(+). Functionally, involved in the post-translational conjugation of arginine to the N-terminal aspartate or glutamate of a protein. This arginylation is required for degradation of the protein via the ubiquitin pathway. Component of the N-end rule pathway with ATE2 and PRT6. The N-end rule pathway regulates seed after-ripening, seedling sugar sensitivity, seedling lipid breakdown, and abscisic acid (ABA) sensitivity of germination. The end-rule pathway regulates various aspects of leaf and shoot development. Involved in the oxygen-dependent N-arginylation of RAP2-12, an activator of hypoxic gene expression. This N-terminal modification leads to ubiquitination by PRT6 and subsequent degradation of RAP2-12 under aerobic conditions. Has an important role in the progression of leaf senescence. Involved in disease resistance. The end-rule pathway plays a role in regulating the timing and amplitude of the immune response following infection with the bacterial pathogen Pseudomonas syringae pv tomato. Regulates the biosynthesis of plant-defense metabolites such as glucosinolates, and the biosynthesis and response to the phytohormone jasmonate (JA), which plays a key role in plant immunity. This Arabidopsis thaliana (Mouse-ear cress) protein is Arginyl-tRNA--protein transferase 1.